Reading from the N-terminus, the 122-residue chain is Putative protein adenylyltransferase MJ1547 (122 aa).

A GSX(10)DXD motif motif is present at residues 11–25; it reads GSYAKNEYTKRSDID. The Mg(2+) site is built by aspartate 23, aspartate 25, and aspartate 48.

Belongs to the MntA antitoxin family. As to quaternary structure, probably forms a complex with cognate toxin MJ1548. The cofactor is Mg(2+).

The catalysed reaction is L-tyrosyl-[protein] + ATP = O-(5'-adenylyl)-L-tyrosyl-[protein] + diphosphate. The enzyme catalyses O-(5'-adenylyl)-L-tyrosyl-[protein] + ATP = O-[5'-(adenylyl-(5'-&gt;3')-adenylyl)]-L-tyrosyl-[protein] + diphosphate. Functionally, probable antitoxin component of a putative type VII toxin-antitoxin (TA) system. Neutralizes cognate toxic MJ1548 by di-AMPylation. This Methanocaldococcus jannaschii (strain ATCC 43067 / DSM 2661 / JAL-1 / JCM 10045 / NBRC 100440) (Methanococcus jannaschii) protein is Putative protein adenylyltransferase MJ1547.